Here is a 549-residue protein sequence, read N- to C-terminus: SH3 domain-containing protein 21 (549 aa).

The interval methionine 1–serine 56 is disordered. Polar residues predominate over residues proline 41–tyrosine 54. The SH3 domain maps to serine 65–proline 126. Disordered regions lie at residues proline 142–lysine 303 and phenylalanine 332–asparagine 479. The segment covering glutamine 211 to serine 220 has biased composition (low complexity). Basic and acidic residues-rich tracts occupy residues proline 267 to alanine 280 and phenylalanine 332 to glutamine 342. 2 stretches are compositionally biased toward polar residues: residues cysteine 343 to glutamine 365 and valine 439 to glutamine 456. A coiled-coil region spans residues methionine 482 to methionine 510. The tract at residues glutamine 528–glutamate 549 is disordered.

The polypeptide is SH3 domain-containing protein 21 (Sh3d21) (Mus musculus (Mouse)).